Consider the following 366-residue polypeptide: 3-dehydroquinate synthase (366 aa).

NAD(+) is bound by residues 107-111 (GVIGD), 131-132 (TT), K144, and K153. Residues E186, H251, and H268 each coordinate Zn(2+).

Belongs to the sugar phosphate cyclases superfamily. Dehydroquinate synthase family. Co(2+) is required as a cofactor. The cofactor is Zn(2+). It depends on NAD(+) as a cofactor.

The protein resides in the cytoplasm. It carries out the reaction 7-phospho-2-dehydro-3-deoxy-D-arabino-heptonate = 3-dehydroquinate + phosphate. Its pathway is metabolic intermediate biosynthesis; chorismate biosynthesis; chorismate from D-erythrose 4-phosphate and phosphoenolpyruvate: step 2/7. In terms of biological role, catalyzes the conversion of 3-deoxy-D-arabino-heptulosonate 7-phosphate (DAHP) to dehydroquinate (DHQ). This Microcystis aeruginosa (strain NIES-843 / IAM M-2473) protein is 3-dehydroquinate synthase.